Consider the following 118-residue polypeptide: MEVRAMVREVRVSPQKARMVIDVIRGKPLRDALAVLQVLPQKTAPIALKLLRSAAANAEHNYDLDPDRLYVKRIYVDEGPRYKRWQPHARGRVGRKWRRTSHITVILDELPEKGAPRG.

Belongs to the universal ribosomal protein uL22 family. In terms of assembly, part of the 50S ribosomal subunit.

In terms of biological role, this protein binds specifically to 23S rRNA; its binding is stimulated by other ribosomal proteins, e.g. L4, L17, and L20. It is important during the early stages of 50S assembly. It makes multiple contacts with different domains of the 23S rRNA in the assembled 50S subunit and ribosome. Functionally, the globular domain of the protein is located near the polypeptide exit tunnel on the outside of the subunit, while an extended beta-hairpin is found that lines the wall of the exit tunnel in the center of the 70S ribosome. The polypeptide is Large ribosomal subunit protein uL22 (Thermomicrobium roseum (strain ATCC 27502 / DSM 5159 / P-2)).